The chain runs to 146 residues: VQWSESERTIINGIFSHLDYDDLGPKAFSRCLIVYPWTQRYFSSFGNLHNAEAIMGNANVAAHGIKVLHGLDLGLKHMDDIMGAYAELSSLHSEKLHVDPDNFKLLSDCIIIAVAAKLGNAFTPETQAAFHKFLAVVVSALGKQYH.

The region spanning 2–146 (QWSESERTII…VVSALGKQYH (145 aa)) is the Globin domain. Positions 63 and 92 each coordinate heme b.

This sequence belongs to the globin family. As to quaternary structure, heterotetramer of two alpha chains and two beta chains. As to expression, red blood cells.

In terms of biological role, involved in oxygen transport from gills to the various peripheral tissues. The protein is Hemoglobin subunit beta (hbb) of Pogonophryne scotti (Saddleback plunderfish).